Here is a 145-residue protein sequence, read N- to C-terminus: MTTSSGSRIGGLLHASLFSLLGLGLLLAGGFKTVERYHFLRTAQEAQGTVSALNAGGSHPQIDFTSVSGERISYPQGGFIFGYQVGEPVRVLYEAGRPAASAIVDDAGALWGTGAFLCGFGALFGIVGFRGLLGLRSSQPTSKGH.

The next 2 helical transmembrane spans lie at 9–29 and 109–129; these read IGGL…LLAG and ALWG…IVGF.

The protein localises to the membrane. In terms of biological role, immunity protein that plays a role in preventing early activation of toxin Tse4. This is Immune protein Tsi4 from Pseudomonas aeruginosa (strain ATCC 15692 / DSM 22644 / CIP 104116 / JCM 14847 / LMG 12228 / 1C / PRS 101 / PAO1).